The primary structure comprises 498 residues: ATP synthase subunit beta, chloroplastic (498 aa).

172–179 (GGAGVGKT) provides a ligand contact to ATP.

It belongs to the ATPase alpha/beta chains family. F-type ATPases have 2 components, CF(1) - the catalytic core - and CF(0) - the membrane proton channel. CF(1) has five subunits: alpha(3), beta(3), gamma(1), delta(1), epsilon(1). CF(0) has four main subunits: a(1), b(1), b'(1) and c(9-12).

The protein localises to the plastid. The protein resides in the chloroplast thylakoid membrane. The catalysed reaction is ATP + H2O + 4 H(+)(in) = ADP + phosphate + 5 H(+)(out). In terms of biological role, produces ATP from ADP in the presence of a proton gradient across the membrane. The catalytic sites are hosted primarily by the beta subunits. This chain is ATP synthase subunit beta, chloroplastic, found in Brasenia schreberi (Water shield).